The primary structure comprises 297 residues: Pyridoxal 5'-phosphate synthase subunit Pdx1 (297 aa).

Asp-27 is a D-ribose 5-phosphate binding site. Lys-84 serves as the catalytic Schiff-base intermediate with D-ribose 5-phosphate. A D-ribose 5-phosphate-binding site is contributed by Gly-156. Arg-168 lines the D-glyceraldehyde 3-phosphate pocket. D-ribose 5-phosphate contacts are provided by residues Gly-217 and 238–239; that span reads GS.

It belongs to the PdxS/SNZ family. Homohexamer and homododecamer. In the presence of Pdx2, forms a dodecamer of heterodimers.

The enzyme catalyses aldehydo-D-ribose 5-phosphate + D-glyceraldehyde 3-phosphate + L-glutamine = pyridoxal 5'-phosphate + L-glutamate + phosphate + 3 H2O + H(+). The protein operates within cofactor biosynthesis; pyridoxal 5'-phosphate biosynthesis. In terms of biological role, catalyzes the formation of pyridoxal 5'-phosphate from ribose 5-phosphate (RBP), glyceraldehyde 3-phosphate (G3P) and ammonia. The ammonia is provided by Pdx2. Can also use ribulose 5-phosphate and dihydroxyacetone phosphate as substrates, resulting from enzyme-catalyzed isomerization of RBP and G3P, respectively. The polypeptide is Pyridoxal 5'-phosphate synthase subunit Pdx1 (Plasmodium berghei).